Reading from the N-terminus, the 550-residue chain is CTP synthase (550 aa).

Residues 1–265 form an amidoligase domain region; the sequence is MTKFIFVTGG…DEIVVEQLGL (265 aa). Ser13 lines the CTP pocket. Residue Ser13 participates in UTP binding. 14–19 contacts ATP; sequence SLGKGI. Tyr54 contributes to the L-glutamine binding site. Asp71 contributes to the ATP binding site. Mg(2+) contacts are provided by Asp71 and Glu139. CTP-binding positions include 146–148, 186–191, and Lys222; these read DIE and KTKPTQ. Residues 186 to 191 and Lys222 contribute to the UTP site; that span reads KTKPTQ. The 252-residue stretch at 290–541 folds into the Glutamine amidotransferase type-1 domain; the sequence is TITLVGKYVD…IRAAAEHRRR (252 aa). Residue Gly351 participates in L-glutamine binding. Cys378 serves as the catalytic Nucleophile; for glutamine hydrolysis. L-glutamine is bound by residues 379–382, Glu402, and Arg469; that span reads LGMQ. Catalysis depends on residues His514 and Glu516.

This sequence belongs to the CTP synthase family. Homotetramer.

The catalysed reaction is UTP + L-glutamine + ATP + H2O = CTP + L-glutamate + ADP + phosphate + 2 H(+). The enzyme catalyses L-glutamine + H2O = L-glutamate + NH4(+). It catalyses the reaction UTP + NH4(+) + ATP = CTP + ADP + phosphate + 2 H(+). It participates in pyrimidine metabolism; CTP biosynthesis via de novo pathway; CTP from UDP: step 2/2. Its activity is regulated as follows. Allosterically activated by GTP, when glutamine is the substrate; GTP has no effect on the reaction when ammonia is the substrate. The allosteric effector GTP functions by stabilizing the protein conformation that binds the tetrahedral intermediate(s) formed during glutamine hydrolysis. Inhibited by the product CTP, via allosteric rather than competitive inhibition. Functionally, catalyzes the ATP-dependent amination of UTP to CTP with either L-glutamine or ammonia as the source of nitrogen. Regulates intracellular CTP levels through interactions with the four ribonucleotide triphosphates. In Nitrosococcus oceani (strain ATCC 19707 / BCRC 17464 / JCM 30415 / NCIMB 11848 / C-107), this protein is CTP synthase.